The sequence spans 59 residues: Large ribosomal subunit protein bL32 (59 aa).

The interval 1–24 (MAVQQNKKSPSKRGMHRSHDFLTS) is disordered.

The protein belongs to the bacterial ribosomal protein bL32 family.

This chain is Large ribosomal subunit protein bL32, found in Ralstonia nicotianae (strain ATCC BAA-1114 / GMI1000) (Ralstonia solanacearum).